Consider the following 754-residue polypeptide: Relaxin receptor 2 (754 aa).

Residues 1–416 (MIVFLVFKHL…SSFEDLLANN (416 aa)) lie on the Extracellular side of the membrane. The LDL-receptor class A domain occupies 44–81 (SCQKGYFPCGNLTKCLPRAFHCDGKDDCGNGADEENCG). Intrachain disulfides connect Cys45–Cys58, Cys52–Cys71, and Cys65–Cys80. A glycan (N-linked (GlcNAc...) asparagine) is linked at Asn54. An N-linked (GlcNAc...) asparagine glycan is attached at Asn138. LRR repeat units lie at residues 138 to 159 (NVTL…VFIK), 162 to 183 (KLKK…AFFG), 186 to 207 (NLQI…IFKD), 210 to 231 (QLTW…LFTG), 234 to 255 (SLFF…MCAQ), 258 to 279 (QLNW…TFLS), 282 to 303 (SLTV…TFSS), 306 to 327 (NLGE…LFKD), 330 to 351 (LLQK…QFES), and 354 to 375 (QLQS…MFQP). A glycan (N-linked (GlcNAc...) asparagine) is linked at Asn274. N-linked (GlcNAc...) asparagine glycosylation is present at Asn335. Asn378 carries an N-linked (GlcNAc...) asparagine glycan. The helical transmembrane segment at 417–437 (ILRIFVWVIAFITCFGNLFVI) threads the bilayer. Residues 438-455 (GMRSFIKAENTTHAMSIK) lie on the Cytoplasmic side of the membrane. Residues 456-476 (ILCCADCLMGVYLFFVGIFDI) form a helical membrane-spanning segment. The Extracellular segment spans residues 477 to 495 (KYRGQYQKYALLWMESVQC). Cys495 and Cys573 are joined by a disulfide. The chain crosses the membrane as a helical span at residues 496 to 518 (RLMGFLAMLSTEVSVLLLTYLTL). Residues 519-537 (EKFLVIVFPFSNIRPGKRQ) lie on the Cytoplasmic side of the membrane. Residues 538–558 (TSVILICIWMAGFLIAVIPFW) form a helical membrane-spanning segment. At 559 to 592 (NKDYFGNFYGKNGVCFPLYYDQTEDIGSKGYSLG) the chain is on the extracellular side. A helical transmembrane segment spans residues 593 to 613 (IFLGVNLLAFLIIVFSYITMF). Over 614–639 (CSIQKTALQTTEVRNCFGREVAVANR) the chain is Cytoplasmic. A helical transmembrane segment spans residues 640–660 (FFFIVFSDAICWIPVFVVKIL). Topologically, residues 661–670 (SLFRVEIPDT) are extracellular. The chain crosses the membrane as a helical span at residues 671 to 691 (MTSWIVIFFLPVNSALNPILY). Residues 692–754 (TLTTNFFKDK…LGDSIMKPVS (63 aa)) lie on the Cytoplasmic side of the membrane.

This sequence belongs to the G-protein coupled receptor 1 family. Expressed mainly in the brain, kidney, muscle, testis, thyroid, uterus, peripheral blood cells and bone marrow.

It localises to the cell membrane. In terms of biological role, receptor for relaxin. The activity of this receptor is mediated by G proteins leading to stimulation of adenylate cyclase and an increase of cAMP. May also be a receptor for Leydig insulin-like peptide (INSL3). The chain is Relaxin receptor 2 (RXFP2) from Homo sapiens (Human).